We begin with the raw amino-acid sequence, 168 residues long: D-aminoacyl-tRNA deacylase 2 (168 aa).

The short motif at 160 to 161 (GP) is the Gly-transPro motif, allows the protein to recognize chirality of D-amino acids element.

This sequence belongs to the DTD family. In terms of assembly, homodimer.

The protein localises to the cytoplasm. It catalyses the reaction a D-aminoacyl-tRNA + H2O = a tRNA + a D-alpha-amino acid + H(+). The catalysed reaction is glycyl-tRNA(Ala) + H2O = tRNA(Ala) + glycine + H(+). The enzyme catalyses D-tyrosyl-tRNA(Tyr) + H2O = D-tyrosine + tRNA(Tyr). It carries out the reaction L-alanyl-tRNA(Thr) + H2O = tRNA(Thr) + L-alanine + H(+). Its function is as follows. Deacylates mischarged D-aminoacyl-tRNAs. Also deacylates mischarged glycyl-tRNA(Ala), protecting cells against glycine mischarging by AlaRS. Probably acts by rejecting L-amino acids from its binding site rather than specific recognition of D-amino acids. Catalyzes the hydrolysis of D-tyrosyl-tRNA(Tyr), has no activity on correctly charged L-tyrosyl-tRNA(Tyr). By recycling D-aminoacyl-tRNA to D-amino acids and free tRNA molecules, this enzyme counteracts the toxicity associated with the formation of D-aminoacyl-tRNA entities in vivo and helps enforce protein L-homochirality. In contrast to DTD1, deacylates L-Ala mischarged on tRNA(Thr)(G4.U69) by alanine-tRNA ligase AARS. Can deacylate L-Ala due to a relaxed specificity for substrate chirality caused by the trans conformation of the Gly-Pro motif in the active site. Also hydrolyzes correctly charged, achiral, glycyl-tRNA(Gly) in vitro, although in vivo EEF1A1/EF-Tu may protect cognate achiral glycyl-tRNA(Gly) from DTD2-mediated deacetylation. This chain is D-aminoacyl-tRNA deacylase 2 (DTD2), found in Homo sapiens (Human).